The primary structure comprises 84 residues: Protein myomixer (84 aa).

Residues 1–4 are Cytoplasmic-facing; it reads MPTP. Residues 5 to 25 form a helical membrane-spanning segment; sequence LLPLLLRLLLSCLLLPAARLA. The Extracellular segment spans residues 26–84; the sequence is RQYLLPLLRRLARRLGSQDMREALLGCLLFILSQRHSPDAGEASRVDRLERRERLGPQK. The AxLyCxL signature appears at 48 to 57; sequence ALLGCLLFIL. The segment at 62–84 is disordered; the sequence is SPDAGEASRVDRLERRERLGPQK.

This sequence belongs to the MYMX family. Interacts with MYMK.

It localises to the cell membrane. In terms of biological role, myoblast-specific protein that mediates myoblast fusion, an essential step for the formation of multi-nucleated muscle fibers. Involved in membrane fusion downstream of the lipid mixing step mediated by MYMK. Acts by generating membrane stresses via its extracellular C-terminus, leading to drive fusion pore formation. Acts independently of MYMK. Involved in skeletal muscle regeneration in response to injury by mediating the fusion of satellite cells, a population of muscle stem cells, with injured myofibers. The chain is Protein myomixer from Homo sapiens (Human).